We begin with the raw amino-acid sequence, 555 residues long: Inositol 1,4,5-trisphosphate receptor-interacting protein-like 1 (555 aa).

An N-terminal signal peptide occupies residues Met1–His24. The Extracellular portion of the chain corresponds to His25–Gly103. Residues Leu38–Asn74 adopt a coiled-coil conformation. The helical transmembrane segment at Pro104 to Phe124 threads the bilayer. Over Glu125–Pro555 the chain is Cytoplasmic.

It belongs to the ITPRIP family. In terms of tissue distribution, expressed in testis and tumoral cells.

Its subcellular location is the cell membrane. Its function is as follows. Functions as a ligand of CD3E, inhibiting TCR-CD3 complex signaling to regulate T cell activation. Induces stable CD3E-NCK1 binding, thereby preventing the CD3E-ZAP70 interaction and subsequently inhibiting the activation of the downstream ERK-NFkB signaling cascade and calcium influx. The polypeptide is Inositol 1,4,5-trisphosphate receptor-interacting protein-like 1 (Homo sapiens (Human)).